Here is a 239-residue protein sequence, read N- to C-terminus: Aspartate/glutamate leucyltransferase (239 aa).

It belongs to the R-transferase family. Bpt subfamily.

The protein localises to the cytoplasm. It catalyses the reaction N-terminal L-glutamyl-[protein] + L-leucyl-tRNA(Leu) = N-terminal L-leucyl-L-glutamyl-[protein] + tRNA(Leu) + H(+). The catalysed reaction is N-terminal L-aspartyl-[protein] + L-leucyl-tRNA(Leu) = N-terminal L-leucyl-L-aspartyl-[protein] + tRNA(Leu) + H(+). In terms of biological role, functions in the N-end rule pathway of protein degradation where it conjugates Leu from its aminoacyl-tRNA to the N-termini of proteins containing an N-terminal aspartate or glutamate. In Campylobacter jejuni subsp. jejuni serotype O:6 (strain 81116 / NCTC 11828), this protein is Aspartate/glutamate leucyltransferase.